The following is a 70-amino-acid chain: Large ribosomal subunit protein bL31 (70 aa).

Positions 16, 18, 37, and 40 each coordinate Zn(2+).

The protein belongs to the bacterial ribosomal protein bL31 family. Type A subfamily. In terms of assembly, part of the 50S ribosomal subunit. Requires Zn(2+) as cofactor.

In terms of biological role, binds the 23S rRNA. This is Large ribosomal subunit protein bL31 from Shewanella denitrificans (strain OS217 / ATCC BAA-1090 / DSM 15013).